The primary structure comprises 797 residues: MSTRTPLPTVNERDTENHISHGDGRQEVTSRTGRSGARCRNSIASCADEQPHIGNYRLLKTIGKGNFAKVKLARHILTGREVAIKIIDKTQLNPTSLQKLFREVRIMKILNHPNIVKLFEVIETEKTLYLIMEYASGGEVFDYLVAHGRMKEKEARAKFRQIVSAVQYCHQKRIVHRDLKAENLLLDADMNIKITDFGFSNEFTVGSKLDTFCGSPPYAAPELFQGKKYDGPEVDVWSLGVILYTLVSGSLPFDGQNLKELRERVLRGKYRIPFYMSTDCENLLKRFLVLNPVKRGTLEQIMKDRWINAGHEEEELKPFVEPELDISDQKRIDIMVGMGYSQEEIQESLSKMKYDEITATYLLLGRKSAELDASDSSSSSNLSLAKVRPSSDLSNSTGQSPHHKGQRSVSSSQKQRRYSDHAGPAIPSVVAYPKRSQTSTADSDLKEDGVPSRKSGSSAVGGKGIAPASPMLGNASNPNKADIPERKKSPAVPSSNAASGGMTRRNTYVCSERCAADRHSVIQNGKESSLTEVFAYAASPASLCATSTCRLRHQRSMSVSASGHPKMVLPPIDSEGDTFKAITTPDQRTPVASTHSISSATTPDRIRFPRGTASRSTFHGQPRERRTATYNGPPASPSLSHEATPLSQTRSRGSTNLFSKLTSKLTRRLPTEYERNGRYEGSSRNVSSEQKDENREAKPRSLRFTWSMKTTSSMDPSDMMREIRKVLDANTCDYEQRERFLLFCVHGDGHAESLVQWEMEVCKLPRLSLNGVRFKRISGTSIAFKNIASKIANELKL.

The interval 1–35 (MSTRTPLPTVNERDTENHISHGDGRQEVTSRTGRS) is disordered. Residues 11–28 (NERDTENHISHGDGRQEV) show a composition bias toward basic and acidic residues. At Ser-42 the chain carries Phosphoserine. Positions 56–307 (YRLLKTIGKG…LEQIMKDRWI (252 aa)) constitute a Protein kinase domain. ATP-binding positions include 62–70 (IGKGNFAKV) and Lys-85. The active-site Proton acceptor is Asp-178. Thr-211 carries the phosphothreonine; by LKB1 modification. The 40-residue stretch at 326–365 (ISDQKRIDIMVGMGYSQEEIQESLSKMKYDEITATYLLLG) folds into the UBA domain. Phosphoserine occurs at positions 368, 374, 376, 380, 383, 400, 419, and 469. Disordered stretches follow at residues 372–504 (DASD…GMTR) and 585–701 (PDQR…KPRS). Residues 374 to 385 (SDSSSSSNLSLA) show a composition bias toward low complexity. Residues 391 to 400 (SDLSNSTGQS) show a composition bias toward polar residues. 2 stretches are compositionally biased toward polar residues: residues 492 to 504 (VPSS…GMTR) and 585 to 602 (PDQR…SATT). Phosphoserine occurs at positions 593 and 596. The residue at position 602 (Thr-602) is a Phosphothreonine. The residue at position 617 (Thr-617) is a Phosphothreonine; by PKC/PRKCZ. Phosphoserine is present on residues Ser-636, Ser-651, and Ser-654. Residues 637–664 (PSLSHEATPLSQTRSRGSTNLFSKLTSK) show a composition bias toward polar residues. Basic and acidic residues predominate over residues 669-678 (LPTEYERNGR). Phosphoserine is present on Ser-687. The span at 689-699 (EQKDENREAKP) shows a compositional bias: basic and acidic residues. Positions 748–797 (DGHAESLVQWEMEVCKLPRLSLNGVRFKRISGTSIAFKNIASKIANELKL) constitute a KA1 domain.

This sequence belongs to the protein kinase superfamily. CAMK Ser/Thr protein kinase family. SNF1 subfamily. In terms of assembly, interacts with MAPT/TAU. Interacts with DLG5 (via coiled-coil domain). Interacts with STK3/MST2 and STK4/MST1 in the presence of DLG5. Interacts with YWHAB, YWHAG, YWHAQ and YWHAZ. Interacts with PKP2 (via N-terminus). Interacts with CDC25C. Interacts with KSR1. Phosphorylated at Thr-211 by STK11/LKB1 in complex with STE20-related adapter-alpha (STRADA) pseudo kinase and CAB39. Phosphorylation at Thr-617 by PRKCZ/aPKC inhibits the kinase activity.

The protein localises to the cell membrane. It is found in the cell projection. It localises to the dendrite. Its subcellular location is the cytoplasm. The catalysed reaction is L-seryl-[protein] + ATP = O-phospho-L-seryl-[protein] + ADP + H(+). The enzyme catalyses L-threonyl-[protein] + ATP = O-phospho-L-threonyl-[protein] + ADP + H(+). Its activity is regulated as follows. Activated by phosphorylation on Thr-211. Inhibited by phosphorylation on Thr-617. Its function is as follows. Serine/threonine-protein kinase. Involved in the specific phosphorylation of microtubule-associated proteins for MAP2 and MAP4. Phosphorylates the microtubule-associated protein MAPT/TAU. Phosphorylates CDC25C on 'Ser-216'. Regulates localization and activity of some histone deacetylases by mediating phosphorylation of HDAC7, promoting subsequent interaction between HDAC7 and 14-3-3 and export from the nucleus. Regulates localization and activity of MITF by mediating its phosphorylation, promoting subsequent interaction between MITF and 14-3-3 and retention in the cytosol. Negatively regulates the Hippo signaling pathway and antagonizes the phosphorylation of LATS1. Cooperates with DLG5 to inhibit the kinase activity of STK3/MST2 toward LATS1. Phosphorylates PKP2 and KSR1. This chain is MAP/microtubule affinity-regulating kinase 3 (Mark3), found in Rattus norvegicus (Rat).